A 296-amino-acid chain; its full sequence is Thioredoxin-related transmembrane protein 2 (296 aa).

The first 48 residues, 1–48 (MAVLAPLIALVYSVPRLSRWLARPYYFLSALLSAAFLLVRKLPPVCES), serve as a signal peptide directing secretion. The Extracellular portion of the chain corresponds to 49 to 102 (LPTQREDGNPCDFDWREVEILMFLSAIVMMKNRRSITVEQHVGNIFMFSKVANA). Residues 103-125 (ILFFRLDIRMGLLYITLCIVFLM) form a helical membrane-spanning segment. Topologically, residues 126-296 (TCKPPLYMGP…VPDEESKKDK (171 aa)) are cytoplasmic. Positions 132-269 (YMGPEYIKYF…LYQRAKKLSK (138 aa)) constitute a Thioredoxin domain. Phosphoserine occurs at positions 211 and 243. Residues 272 to 296 (DKIPEEQPVAAVPAAVPDEESKKDK) are disordered. Over residues 277–287 (EQPVAAVPAAV) the composition is skewed to low complexity. The Di-lysine motif signature appears at 293-296 (KKDK).

In terms of assembly, monomer. Homodimer; disulfide-linked. Occurs in both reduced and oxidized monomeric form. Oxidative conditions increase homodimerization. Interacts with CANX. Interacts with ATP2A2.

It localises to the endoplasmic reticulum membrane. The protein localises to the mitochondrion membrane. In terms of biological role, endoplasmic reticulum and mitochondria-associated protein that probably functions as a regulator of cellular redox state and thereby regulates protein post-translational modification, protein folding and mitochondrial activity. Indirectly regulates neuronal proliferation, migration, and organization in the developing brain. This Bos taurus (Bovine) protein is Thioredoxin-related transmembrane protein 2 (TMX2).